Consider the following 417-residue polypeptide: Gamma-glutamyl phosphate reductase (417 aa).

The protein belongs to the gamma-glutamyl phosphate reductase family.

It is found in the cytoplasm. The enzyme catalyses L-glutamate 5-semialdehyde + phosphate + NADP(+) = L-glutamyl 5-phosphate + NADPH + H(+). It participates in amino-acid biosynthesis; L-proline biosynthesis; L-glutamate 5-semialdehyde from L-glutamate: step 2/2. In terms of biological role, catalyzes the NADPH-dependent reduction of L-glutamate 5-phosphate into L-glutamate 5-semialdehyde and phosphate. The product spontaneously undergoes cyclization to form 1-pyrroline-5-carboxylate. The polypeptide is Gamma-glutamyl phosphate reductase (Bacteroides thetaiotaomicron (strain ATCC 29148 / DSM 2079 / JCM 5827 / CCUG 10774 / NCTC 10582 / VPI-5482 / E50)).